A 63-amino-acid chain; its full sequence is Period circadian protein (63 aa).

The interval 1–63 (EGSGGSGSSG…VTLTESLLNK (63 aa)) is disordered. Composition is skewed to low complexity over residues 9–31 (SGNFTTGSNVRMSSVTNTSNAGT) and 39–49 (SAAASGASVNA). A compositionally biased stretch (polar residues) spans 54 to 63 (VTLTESLLNK).

As to quaternary structure, forms a heterodimer with timeless (TIM); the complex then translocates into the nucleus. Phosphorylated with a circadian rhythmicity, probably by the double-time protein (dbt). Phosphorylation could be implicated in the stability of per monomer and in the formation of heterodimer per-tim.

It localises to the nucleus. Its subcellular location is the cytoplasm. The protein resides in the perinuclear region. Functionally, essential for biological clock functions. Determines the period length of circadian and ultradian rhythms; an increase in PER dosage leads to shortened circadian rhythms and a decrease leads to lengthened circadian rhythms. Essential for the circadian rhythmicity of locomotor activity, eclosion behavior, and for the rhythmic component of the male courtship song that originates in the thoracic nervous system. The biological cycle depends on the rhythmic formation and nuclear localization of the TIM-PER complex. Light induces the degradation of TIM, which promotes elimination of PER. Nuclear activity of the heterodimer coordinatively regulates PER and TIM transcription through a negative feedback loop. Behaves as a negative element in circadian transcriptional loop. Does not appear to bind DNA, suggesting indirect transcriptional inhibition. The protein is Period circadian protein (per) of Drosophila immigrans (Fruit fly).